The sequence spans 114 residues: Cell division protein FtsB (114 aa).

Residues 1–3 (MGK) lie on the Cytoplasmic side of the membrane. Residues 4–21 (LTLLLVVLLGWLQYSLWV) traverse the membrane as a helical segment. The Periplasmic segment spans residues 22-114 (GKNGVHDYMR…ASYPSVTASH (93 aa)). Residues 31-62 (RVKQDVATQQANNAKLKSRNDQLFAEIDDLNG) are a coiled coil.

It belongs to the FtsB family. As to quaternary structure, part of a complex composed of FtsB, FtsL and FtsQ.

It is found in the cell inner membrane. In terms of biological role, essential cell division protein. May link together the upstream cell division proteins, which are predominantly cytoplasmic, with the downstream cell division proteins, which are predominantly periplasmic. The polypeptide is Cell division protein FtsB (Edwardsiella ictaluri (strain 93-146)).